Consider the following 366-residue polypeptide: Aminomethyltransferase (366 aa).

It belongs to the GcvT family. The glycine cleavage system is composed of four proteins: P, T, L and H.

It carries out the reaction N(6)-[(R)-S(8)-aminomethyldihydrolipoyl]-L-lysyl-[protein] + (6S)-5,6,7,8-tetrahydrofolate = N(6)-[(R)-dihydrolipoyl]-L-lysyl-[protein] + (6R)-5,10-methylene-5,6,7,8-tetrahydrofolate + NH4(+). In terms of biological role, the glycine cleavage system catalyzes the degradation of glycine. This Bacillus cereus (strain B4264) protein is Aminomethyltransferase.